The sequence spans 87 residues: Alpha-elapitoxin-Ls2a (87 aa).

The N-terminal stretch at 1 to 21 (MKTLLLTLVVVTIVCLDLGYT) is a signal peptide. Intrachain disulfides connect C24–C41, C34–C62, C47–C51, C66–C77, and C78–C83.

It belongs to the three-finger toxin family. Long-chain subfamily. Type II alpha-neurotoxin sub-subfamily. In terms of tissue distribution, expressed by the venom gland.

The protein resides in the secreted. Functionally, binds with high affinity to muscular (tested on Torpedo marmorata, Kd=1.6 nM) and neuronal (chimeric alpha-7/CHRNA7, Kd=3 nM) nicotinic acetylcholine receptor (nAChR) and inhibits acetylcholine from binding to the receptor, thereby impairing neuromuscular and neuronal transmission. Also shows a very weak inhibition on GABA(A) receptors. The toxin (10 uM) inhibits 83% of current in channels composed of alpha-1-beta-3-gamma-2 (GABRA1-GABRB3-GABRG2) subunits, 39% of current in channels composed of alpha-2-beta-2-gamma-2 (GABRA2-GABRB2-GABRG2) subunits, and 33% of current in channels composed of alpha-5-beta-2-gamma-2 (GABRA5-GABRB2-GABRG2) subunits. In Laticauda semifasciata (Black-banded sea krait), this protein is Alpha-elapitoxin-Ls2a.